A 151-amino-acid polypeptide reads, in one-letter code: U1 small nuclear ribonucleoprotein C (151 aa).

Residues 4–36 form a Matrin-type zinc finger; sequence FYCEYCSIYLTHSSPAGRKQHSQGRKHISAKVE.

This sequence belongs to the U1 small nuclear ribonucleoprotein C family. In terms of assembly, U1 snRNP is composed of the 7 core Sm proteins B/B', D1, D2, D3, E, F and G that assemble in a heptameric protein ring on the Sm site of the small nuclear RNA to form the core snRNP, and at least 3 U1 snRNP-specific proteins U1-70K, U1-A and U1-C. U1-C interacts with U1 snRNA and the 5' splice-site region of the pre-mRNA.

It localises to the nucleus. Component of the spliceosomal U1 snRNP, which is essential for recognition of the pre-mRNA 5' splice-site and the subsequent assembly of the spliceosome. U1-C is directly involved in initial 5' splice-site recognition for both constitutive and regulated alternative splicing. The interaction with the 5' splice-site seems to precede base-pairing between the pre-mRNA and the U1 snRNA. Stimulates commitment or early (E) complex formation by stabilizing the base pairing of the 5' end of the U1 snRNA and the 5' splice-site region. The polypeptide is U1 small nuclear ribonucleoprotein C (Theileria annulata).